Consider the following 46-residue polypeptide: KECMADETVCYIHNHNNCCGSCLCLNGPYARPWEMLVGNCKCGPKE.

4 disulfides stabilise this stretch: cysteine 3–cysteine 19, cysteine 10–cysteine 22, cysteine 18–cysteine 42, and cysteine 24–cysteine 40. The segment at 31–33 is keys region for toxin activity; that stretch reads RPW.

The protein belongs to the neurotoxin 16 (SFI) family. In terms of tissue distribution, expressed by the venom gland.

It localises to the secreted. Insecticidal toxin. Causes flaccid paralysis followed by death when injected into Heliothis virescens larvae. Does not induce any toxic effects when injected intravenously into adult mice at a dose of 1.25 mg/kg body weight. This is Mu-segestritoxin-Sf1b from Segestria florentina (Tube-web spider).